Reading from the N-terminus, the 202-residue chain is Translation initiation factor IF-3 (202 aa).

Positions 178 to 202 (TPRKTPLLKKESETTEPKKALRSIN) are disordered. Over residues 185–196 (LKKESETTEPKK) the composition is skewed to basic and acidic residues.

The protein belongs to the IF-3 family. As to quaternary structure, monomer.

The protein localises to the cytoplasm. Its function is as follows. IF-3 binds to the 30S ribosomal subunit and shifts the equilibrium between 70S ribosomes and their 50S and 30S subunits in favor of the free subunits, thus enhancing the availability of 30S subunits on which protein synthesis initiation begins. This Prochlorococcus marinus (strain NATL1A) protein is Translation initiation factor IF-3.